The chain runs to 223 residues: UPF0441 protein YgiB (223 aa).

Residues 178 to 195 show a composition bias toward low complexity; it reads TVPKTAMAPKPATTTTVT. A disordered region spans residues 178 to 223; that stretch reads TVPKTAMAPKPATTTTVTRGGFGESVAKQSTMQRSATGTSSRSMGG. Over residues 204 to 223 the composition is skewed to polar residues; it reads AKQSTMQRSATGTSSRSMGG.

It belongs to the UPF0441 family.

The polypeptide is UPF0441 protein YgiB (Shigella dysenteriae serotype 1 (strain Sd197)).